The following is a 189-amino-acid chain: dCTP deaminase (189 aa).

DCTP contacts are provided by residues 112 to 117, 136 to 138, Gln157, Tyr171, and Gln181; these read KSTYAR and TLE. Catalysis depends on Glu138, which acts as the Proton donor/acceptor.

It belongs to the dCTP deaminase family. Homotrimer.

The enzyme catalyses dCTP + H2O + H(+) = dUTP + NH4(+). The protein operates within pyrimidine metabolism; dUMP biosynthesis; dUMP from dCTP (dUTP route): step 1/2. Catalyzes the deamination of dCTP to dUTP. This chain is dCTP deaminase, found in Leptothrix cholodnii (strain ATCC 51168 / LMG 8142 / SP-6) (Leptothrix discophora (strain SP-6)).